We begin with the raw amino-acid sequence, 342 residues long: Dihydroorotase (342 aa).

Zn(2+) contacts are provided by His13 and His15. Residues 15–17 (HLR) and Asn41 contribute to the substrate site. Positions 98, 135, and 173 each coordinate Zn(2+). The residue at position 98 (Lys98) is an N6-carboxylysine. Residue His135 participates in substrate binding. Substrate is bound at residue Leu218. Asp246 contributes to the Zn(2+) binding site. Asp246 is an active-site residue. Substrate-binding residues include His250 and Ala262.

Belongs to the metallo-dependent hydrolases superfamily. DHOase family. Class II DHOase subfamily. Homodimer. Zn(2+) serves as cofactor.

It catalyses the reaction (S)-dihydroorotate + H2O = N-carbamoyl-L-aspartate + H(+). It participates in pyrimidine metabolism; UMP biosynthesis via de novo pathway; (S)-dihydroorotate from bicarbonate: step 3/3. Functionally, catalyzes the reversible cyclization of carbamoyl aspartate to dihydroorotate. The chain is Dihydroorotase from Vibrio atlanticus (strain LGP32) (Vibrio splendidus (strain Mel32)).